A 235-amino-acid polypeptide reads, in one-letter code: Phosphoribosylaminoimidazole-succinocarboxamide synthase (235 aa).

Belongs to the SAICAR synthetase family.

It catalyses the reaction 5-amino-1-(5-phospho-D-ribosyl)imidazole-4-carboxylate + L-aspartate + ATP = (2S)-2-[5-amino-1-(5-phospho-beta-D-ribosyl)imidazole-4-carboxamido]succinate + ADP + phosphate + 2 H(+). Its pathway is purine metabolism; IMP biosynthesis via de novo pathway; 5-amino-1-(5-phospho-D-ribosyl)imidazole-4-carboxamide from 5-amino-1-(5-phospho-D-ribosyl)imidazole-4-carboxylate: step 1/2. The polypeptide is Phosphoribosylaminoimidazole-succinocarboxamide synthase (Lachnoclostridium phytofermentans (strain ATCC 700394 / DSM 18823 / ISDg) (Clostridium phytofermentans)).